The chain runs to 128 residues: Fatty acid binding protein 1-B.1 (128 aa).

Belongs to the calycin superfamily. Fatty-acid binding protein (FABP) family. Expressed in the yolk syncytial layer (YSL) and subsequently in the intestinal bulb in developing embryos and larvae. In adults, expressed in the intestine.

It is found in the cytoplasm. Its function is as follows. Binds free fatty acids and their coenzyme A derivatives, bilirubin, and some other small molecules in the cytoplasm. May be involved in intracellular lipid transport. The sequence is that of Fatty acid binding protein 1-B.1 (fabp1b.1) from Danio rerio (Zebrafish).